The following is a 123-amino-acid chain: NADH-quinone oxidoreductase subunit A (123 aa).

Helical transmembrane passes span 6 to 26 (LTPY…AMLI), 66 to 86 (VVAL…PWAV), and 93 to 113 (WFGY…LIYI).

Belongs to the complex I subunit 3 family. NDH-1 is composed of 14 different subunits. Subunits NuoA, H, J, K, L, M, N constitute the membrane sector of the complex.

It localises to the cell inner membrane. It carries out the reaction a quinone + NADH + 5 H(+)(in) = a quinol + NAD(+) + 4 H(+)(out). NDH-1 shuttles electrons from NADH, via FMN and iron-sulfur (Fe-S) centers, to quinones in the respiratory chain. The immediate electron acceptor for the enzyme in this species is believed to be ubiquinone. Couples the redox reaction to proton translocation (for every two electrons transferred, four hydrogen ions are translocated across the cytoplasmic membrane), and thus conserves the redox energy in a proton gradient. This Myxococcus xanthus (strain DK1622) protein is NADH-quinone oxidoreductase subunit A.